Consider the following 141-residue polypeptide: Protein stum homolog (141 aa).

A Phosphoserine modification is found at serine 26. 2 helical membrane passes run 51-71 and 87-107; these read FPVAVICLFLNTFVPGLGTFV and RHVCCVFWLNIAAALIQVLTA.

It belongs to the SPEC3 family. Stum subfamily.

The protein resides in the membrane. In Mus musculus (Mouse), this protein is Protein stum homolog.